Consider the following 154-residue polypeptide: Superoxide dismutase [Cu-Zn] (154 aa).

Residues His-47, His-49, and His-64 each coordinate Cu cation. Cys-58 and Cys-147 are disulfide-bonded. Residues His-64, His-72, His-81, and Asp-84 each contribute to the Zn(2+) site. His-121 serves as a coordination point for Cu cation. The segment covering 125–136 (DDLGKGGNEESL) has biased composition (basic and acidic residues). The segment at 125–144 (DDLGKGGNEESLKTGNAGPR) is disordered. Residue Arg-144 participates in substrate binding.

Belongs to the Cu-Zn superoxide dismutase family. In terms of assembly, homodimer. Requires Cu cation as cofactor. The cofactor is Zn(2+).

The protein resides in the cytoplasm. The catalysed reaction is 2 superoxide + 2 H(+) = H2O2 + O2. Functionally, destroys radicals which are normally produced within the cells and which are toxic to biological systems. The chain is Superoxide dismutase [Cu-Zn] (SOD1) from Cordyceps tenuipes (Entomopathogenic fungus).